A 612-amino-acid polypeptide reads, in one-letter code: Elongation factor 4 (612 aa).

In terms of domain architecture, tr-type G spans 11–193; the sequence is KHIRNFSIVA…RIVTDISAPT (183 aa). Residues 23–28 and 140–143 each bind GTP; these read DHGKST and NKID.

Belongs to the TRAFAC class translation factor GTPase superfamily. Classic translation factor GTPase family. LepA subfamily.

It localises to the cell membrane. The enzyme catalyses GTP + H2O = GDP + phosphate + H(+). Functionally, required for accurate and efficient protein synthesis under certain stress conditions. May act as a fidelity factor of the translation reaction, by catalyzing a one-codon backward translocation of tRNAs on improperly translocated ribosomes. Back-translocation proceeds from a post-translocation (POST) complex to a pre-translocation (PRE) complex, thus giving elongation factor G a second chance to translocate the tRNAs correctly. Binds to ribosomes in a GTP-dependent manner. In Lactobacillus delbrueckii subsp. bulgaricus (strain ATCC 11842 / DSM 20081 / BCRC 10696 / JCM 1002 / NBRC 13953 / NCIMB 11778 / NCTC 12712 / WDCM 00102 / Lb 14), this protein is Elongation factor 4.